A 216-amino-acid chain; its full sequence is Thymidine kinase (216 aa).

ATP contacts are provided by residues 9-16 (GTMDCGKS) and 86-89 (DEAQ). The active-site Proton acceptor is the Glu87.

It belongs to the thymidine kinase family. Homotetramer.

It is found in the cytoplasm. The catalysed reaction is thymidine + ATP = dTMP + ADP + H(+). The chain is Thymidine kinase from Streptomyces coelicolor (strain ATCC BAA-471 / A3(2) / M145).